The following is a 355-amino-acid chain: Heat-inducible transcription repressor HrcA (355 aa).

Belongs to the HrcA family.

Its function is as follows. Negative regulator of class I heat shock genes (grpE-dnaK-dnaJ and groELS operons). Prevents heat-shock induction of these operons. The chain is Heat-inducible transcription repressor HrcA from Nitratidesulfovibrio vulgaris (strain DSM 19637 / Miyazaki F) (Desulfovibrio vulgaris).